We begin with the raw amino-acid sequence, 367 residues long: Probable trehalose-phosphate phosphatase 4 (367 aa).

It belongs to the trehalose phosphatase family. A divalent metal cation is required as a cofactor.

It catalyses the reaction alpha,alpha-trehalose 6-phosphate + H2O = alpha,alpha-trehalose + phosphate. Its pathway is glycan biosynthesis; trehalose biosynthesis. Removes the phosphate from trehalose 6-phosphate to produce free trehalose. Trehalose accumulation in plant may improve abiotic stress tolerance. In Oryza sativa subsp. japonica (Rice), this protein is Probable trehalose-phosphate phosphatase 4 (TPP4).